We begin with the raw amino-acid sequence, 426 residues long: NADH-quinone oxidoreductase subunit F (426 aa).

Position 65 to 74 (65 to 74) interacts with NAD(+); the sequence is GRGGAGFPTG. FMN is bound at residue 176 to 223; sequence GAGAYICGEETALIESLEGKRGHPRLKPPYPVQKGLWGKPTVVNNVET. Residues Cys-347, Cys-350, Cys-353, and Cys-393 each coordinate [4Fe-4S] cluster.

The protein belongs to the complex I 51 kDa subunit family. Requires FMN as cofactor. The cofactor is [4Fe-4S] cluster.

It catalyses the reaction a quinone + NADH + 5 H(+)(in) = a quinol + NAD(+) + 4 H(+)(out). In terms of biological role, NDH-1 shuttles electrons from NADH, via FMN and iron-sulfur (Fe-S) centers, to quinones in the respiratory chain. Couples the redox reaction to proton translocation (for every two electrons transferred, four hydrogen ions are translocated across the cytoplasmic membrane), and thus conserves the redox energy in a proton gradient. The chain is NADH-quinone oxidoreductase subunit F (nuoF) from Aquifex aeolicus (strain VF5).